A 399-amino-acid polypeptide reads, in one-letter code: MTPSAASALVEKTPLETYVPPAKPSLIGLSRAQLCDRLGDVGVAPPQRKMRAQQLWHWMYVRGARDFSEMTNVSKEMRATLAEHFTVDRPEVVAEQISADGTRKWLLRLPSGGDGQKAHEVECVYIPETDRGTLCVSSQVGCTLNCAFCHTGTQRLVRNLTAGEIVGQVMVARDRLGDWIDRETPNGNRLITNIVMMGMGEPLYNFDAVRDALLIVSDNEGIGISRRRITLSTSGVVPNIKRTGDEIGVMLAISLHAVRDELRDELVPLNRKYPLKELLQACRDYPGASNARRITFEYVMLKGVNDSLDDARKLVQLLKGIPAKINLIPFNPWPGSNYECSDWDQIEKFSEYVFNAGYSSPVRTPRGRDILAACGQLKSETEKLSVRERNALRAMAMTD.

Catalysis depends on Glu122, which acts as the Proton acceptor. Residues Glu128 to Leu371 form the Radical SAM core domain. Cysteines 135 and 374 form a disulfide. Cys142, Cys146, and Cys149 together coordinate [4Fe-4S] cluster. Residues Gly200 to Glu201, Ser232, Ser254 to His256, and Asn331 each bind S-adenosyl-L-methionine. The S-methylcysteine intermediate role is filled by Cys374.

Belongs to the radical SAM superfamily. RlmN family. It depends on [4Fe-4S] cluster as a cofactor.

Its subcellular location is the cytoplasm. The catalysed reaction is adenosine(2503) in 23S rRNA + 2 reduced [2Fe-2S]-[ferredoxin] + 2 S-adenosyl-L-methionine = 2-methyladenosine(2503) in 23S rRNA + 5'-deoxyadenosine + L-methionine + 2 oxidized [2Fe-2S]-[ferredoxin] + S-adenosyl-L-homocysteine. It catalyses the reaction adenosine(37) in tRNA + 2 reduced [2Fe-2S]-[ferredoxin] + 2 S-adenosyl-L-methionine = 2-methyladenosine(37) in tRNA + 5'-deoxyadenosine + L-methionine + 2 oxidized [2Fe-2S]-[ferredoxin] + S-adenosyl-L-homocysteine. Functionally, specifically methylates position 2 of adenine 2503 in 23S rRNA and position 2 of adenine 37 in tRNAs. m2A2503 modification seems to play a crucial role in the proofreading step occurring at the peptidyl transferase center and thus would serve to optimize ribosomal fidelity. This Rhodopseudomonas palustris (strain TIE-1) protein is Dual-specificity RNA methyltransferase RlmN.